The sequence spans 1325 residues: NHS-like protein 3 (1325 aa).

Residues 53 to 85 (LEDLHTEAQEGLKILQQEEEDTSSKERNESLEN) are a coiled coil. Disordered stretches follow at residues 68–92 (QQEEEDTSSKERNESLENDSTSGHS), 111–131 (QGSTFKPLNPVKRLDKSKRRS), 291–348 (CSAS…KGKC), 368–570 (MSVS…AKTS), 595–614 (QTNTTSSEPLKFSPPLTTVK), 829–891 (EVNG…MEES), 935–981 (LLST…VSEF), 1084–1138 (VGED…SSAV), 1243–1272 (GTKKPIKVPPPVAKKPVHGSNPPNKMENAT), and 1293–1313 (SDQVHPAGQRAQSLGNQEQAS). The span at 296–334 (ASKGSMASASPSSSRSGSGTNQAPPTTSPSRSNSQSSET) shows a compositional bias: low complexity. Residues 335–344 (IVSNSSTISS) are compositionally biased toward polar residues. The span at 369-378 (SVSSSSSWKS) shows a compositional bias: low complexity. The segment covering 400-412 (VRNSHSFSRSLSV) has biased composition (polar residues). Positions 428-447 (LHHENMQRQREQGDIQDPKD) are enriched in basic and acidic residues. Residues 450–460 (PNNNEQTNRDI) show a composition bias toward polar residues. The span at 515-524 (KTRECGENFD) shows a compositional bias: basic and acidic residues. Positions 528–541 (SPSSGYSSQSGTPT) are enriched in low complexity. The segment covering 834–850 (SPPPSPPPEHHPPPPPI) has biased composition (pro residues). Polar residues-rich tracts occupy residues 935–948 (LLSTNVSDMDSSPE) and 1088–1100 (QVNNDSKPSTEPT). Residues 1124-1138 (KSNSPAKSSSASSAV) are compositionally biased toward low complexity. A compositionally biased stretch (polar residues) spans 1302-1311 (RAQSLGNQEQ).

Its function is as follows. Able to directly activate the TNF-NFkappaB signaling pathway. This chain is NHS-like protein 3 (nhsl3), found in Danio rerio (Zebrafish).